The chain runs to 313 residues: Putative serine protease 29 (313 aa).

The segment covering Met-1–Thr-22 has biased composition (pro residues). The disordered stretch occupies residues Met-1–Pro-27. Residues Ile-68–Gly-310 enclose the Peptidase S1 domain. Cysteines 99 and 115 form a disulfide. The Charge relay system role is filled by His-114. The N-linked (GlcNAc...) asparagine glycan is linked to Asn-143. Asp-161 (charge relay system) is an active-site residue. Cystine bridges form between Cys-193–Cys-268, Cys-226–Cys-249, and Cys-258–Cys-286. The active-site Charge relay system is Ser-262.

This sequence belongs to the peptidase S1 family.

It is found in the secreted. In Homo sapiens (Human), this protein is Putative serine protease 29 (PRSS29P).